A 110-amino-acid chain; its full sequence is Large ribosomal subunit protein uL22 (110 aa).

It belongs to the universal ribosomal protein uL22 family. As to quaternary structure, part of the 50S ribosomal subunit.

This protein binds specifically to 23S rRNA; its binding is stimulated by other ribosomal proteins, e.g. L4, L17, and L20. It is important during the early stages of 50S assembly. It makes multiple contacts with different domains of the 23S rRNA in the assembled 50S subunit and ribosome. In terms of biological role, the globular domain of the protein is located near the polypeptide exit tunnel on the outside of the subunit, while an extended beta-hairpin is found that lines the wall of the exit tunnel in the center of the 70S ribosome. This Janthinobacterium sp. (strain Marseille) (Minibacterium massiliensis) protein is Large ribosomal subunit protein uL22.